The sequence spans 184 residues: Adenylate kinase 1 (184 aa).

Residue 11–16 (GAGKGT) coordinates ATP. The tract at residues 31–60 (STGDILRQAMKEQTPLGIKAQSYVDSGELV) is NMP. Residues Thr32, Arg37, 58–60 (ELV), 86–89 (GFPR), and Gln93 each bind AMP. Residues 127 to 133 (SRGRKDD) form an LID region. Arg128 provides a ligand contact to ATP. Residues Arg130 and Arg141 each coordinate AMP. Gln169 contacts ATP.

Belongs to the adenylate kinase family. Monomer.

It is found in the cytoplasm. The catalysed reaction is AMP + ATP = 2 ADP. Its pathway is purine metabolism; AMP biosynthesis via salvage pathway; AMP from ADP: step 1/1. Its function is as follows. Catalyzes the reversible transfer of the terminal phosphate group between ATP and AMP. Plays an important role in cellular energy homeostasis and in adenine nucleotide metabolism. This is Adenylate kinase 1 from Nostoc sp. (strain PCC 7120 / SAG 25.82 / UTEX 2576).